A 120-amino-acid polypeptide reads, in one-letter code: UPF0342 protein Csac_0863 (120 aa).

Belongs to the UPF0342 family.

This Caldicellulosiruptor saccharolyticus (strain ATCC 43494 / DSM 8903 / Tp8T 6331) protein is UPF0342 protein Csac_0863.